Consider the following 372-residue polypeptide: tRNA-specific 2-thiouridylase MnmA (372 aa).

Residues 16–23 and M42 contribute to the ATP site; that span reads GMSGGVDS. Residues 102–104 are interaction with target base in tRNA; the sequence is NPD. The active-site Nucleophile is C107. An intrachain disulfide couples C107 to C205. Position 132 (G132) interacts with ATP. The interval 155 to 157 is interaction with tRNA; it reads KDQ. The Cysteine persulfide intermediate role is filled by C205. The tract at residues 317–318 is interaction with tRNA; that stretch reads RY.

The protein belongs to the MnmA/TRMU family.

It localises to the cytoplasm. It catalyses the reaction S-sulfanyl-L-cysteinyl-[protein] + uridine(34) in tRNA + AH2 + ATP = 2-thiouridine(34) in tRNA + L-cysteinyl-[protein] + A + AMP + diphosphate + H(+). Catalyzes the 2-thiolation of uridine at the wobble position (U34) of tRNA, leading to the formation of s(2)U34. This is tRNA-specific 2-thiouridylase MnmA from Shewanella putrefaciens (strain CN-32 / ATCC BAA-453).